Reading from the N-terminus, the 282-residue chain is Glutamate racemase (282 aa).

Substrate-binding positions include 13 to 14 and 45 to 46; these read DS and YG. The Proton donor/acceptor role is filled by C76. 77-78 contributes to the substrate binding site; it reads NT. The active-site Proton donor/acceptor is the C186. 187 to 188 provides a ligand contact to substrate; the sequence is TH.

This sequence belongs to the aspartate/glutamate racemases family.

The enzyme catalyses L-glutamate = D-glutamate. It functions in the pathway cell wall biogenesis; peptidoglycan biosynthesis. Functionally, provides the (R)-glutamate required for cell wall biosynthesis. The polypeptide is Glutamate racemase (Ralstonia pickettii (strain 12J)).